Reading from the N-terminus, the 202-residue chain is ATP-dependent Clp protease proteolytic subunit 2 (202 aa).

Ser-99 acts as the Nucleophile in catalysis. His-124 is an active-site residue.

The protein belongs to the peptidase S14 family. Fourteen ClpP subunits assemble into 2 heptameric rings which stack back to back to give a disk-like structure with a central cavity, resembling the structure of eukaryotic proteasomes.

The protein resides in the cytoplasm. The catalysed reaction is Hydrolysis of proteins to small peptides in the presence of ATP and magnesium. alpha-casein is the usual test substrate. In the absence of ATP, only oligopeptides shorter than five residues are hydrolyzed (such as succinyl-Leu-Tyr-|-NHMec, and Leu-Tyr-Leu-|-Tyr-Trp, in which cleavage of the -Tyr-|-Leu- and -Tyr-|-Trp bonds also occurs).. Functionally, cleaves peptides in various proteins in a process that requires ATP hydrolysis. Has a chymotrypsin-like activity. Plays a major role in the degradation of misfolded proteins. This chain is ATP-dependent Clp protease proteolytic subunit 2, found in Desulfitobacterium hafniense (strain Y51).